A 272-amino-acid chain; its full sequence is Glutamate racemase (272 aa).

Residues 13–14 (DS) and 45–46 (YG) contribute to the substrate site. The Proton donor/acceptor role is filled by Cys76. 77–78 (NT) lines the substrate pocket. The active-site Proton donor/acceptor is the Cys186. 187–188 (TH) contacts substrate.

It belongs to the aspartate/glutamate racemases family.

It carries out the reaction L-glutamate = D-glutamate. It participates in cell wall biogenesis; peptidoglycan biosynthesis. In terms of biological role, provides the (R)-glutamate required for cell wall biosynthesis. This chain is Glutamate racemase, found in Cupriavidus pinatubonensis (strain JMP 134 / LMG 1197) (Cupriavidus necator (strain JMP 134)).